A 162-amino-acid polypeptide reads, in one-letter code: Lipoprotein signal peptidase (162 aa).

The next 2 membrane-spanning stretches (helical) occupy residues 66–86 (PFFI…FRKL) and 92–112 (LAAV…IDRV). Catalysis depends on residues aspartate 119 and aspartate 137. A helical membrane pass occupies residues 132–152 (AFNVADSAICVGVALLALDMI).

It belongs to the peptidase A8 family.

The protein localises to the cell inner membrane. It catalyses the reaction Release of signal peptides from bacterial membrane prolipoproteins. Hydrolyzes -Xaa-Yaa-Zaa-|-(S,diacylglyceryl)Cys-, in which Xaa is hydrophobic (preferably Leu), and Yaa (Ala or Ser) and Zaa (Gly or Ala) have small, neutral side chains.. It functions in the pathway protein modification; lipoprotein biosynthesis (signal peptide cleavage). Its function is as follows. This protein specifically catalyzes the removal of signal peptides from prolipoproteins. The protein is Lipoprotein signal peptidase of Geobacter metallireducens (strain ATCC 53774 / DSM 7210 / GS-15).